Here is a 687-residue protein sequence, read N- to C-terminus: Phenylalanine aminomutase (L-beta-phenylalanine forming) (687 aa).

The Proton donor/acceptor role is filled by Tyr-80. Residues 175–177 (ASG) constitute a cross-link (5-imidazolinone (Ala-Gly)). At Ser-176 the chain carries 2,3-didehydroalanine (Ser). The (E)-cinnamate site is built by Asn-231, Gln-319, Arg-325, Asn-355, Lys-427, Glu-455, and Asn-458.

This sequence belongs to the PAL/histidase family. In terms of assembly, homodimer. Homotetramer, dimer of dimers. Contains an active site 4-methylidene-imidazol-5-one (MIO), which is formed autocatalytically by cyclization and dehydration of residues Ala-Ser-Gly.

The protein resides in the cytoplasm. The enzyme catalyses L-phenylalanine = L-beta-phenylalanine. It carries out the reaction L-phenylalanine = (E)-cinnamate + NH4(+). It participates in alkaloid biosynthesis; taxol biosynthesis. Its pathway is phenylpropanoid metabolism; trans-cinnamate biosynthesis; trans-cinnamate from L-phenylalanine: step 1/1. Functionally, phenylalanine aminomutase that catalyzes the rearrangement of L-phenylalanine to R-beta-phenylalanine. Catalyzes the first committed step in the biosynthesis of the side chain of the alkaloid taxol (paclitaxel), a widely-used compound with antitumor activity. Also has low phenylalanine ammonia-lyase activity and can catalyze the amination of trans-cinnamate. This chain is Phenylalanine aminomutase (L-beta-phenylalanine forming) (pam), found in Taxus chinensis (Chinese yew).